Consider the following 344-residue polypeptide: uncharacterized protein (344 aa).

The first 27 residues, M1 to A27, serve as a signal peptide directing secretion. In terms of domain architecture, GH18 spans G29–K344. E140 serves as the catalytic Proton donor.

This sequence belongs to the glycosyl hydrolase 18 family.

This is an uncharacterized protein from Bacillus subtilis (strain 168).